Consider the following 343-residue polypeptide: MGEDAISGNLKNLTIDTRDSETLVVCFGEMLIDFVPTVGGVSLAEAPAFKKAPGGAPANVAVGVSRLGGSSAFIGKVGDDEFGRMLADILRLNNVDNSGMRFDHNARTALAFVTLRGDGEREFLFFRHPSADMLLLESELDKNLIQKAKIFHYGSISLIEEPCRSTQLVAMKIAKAAGSLLSYDPNLRLPLWPSEEAARKEIMSIWNLADVIKISEDEITFLTGGDDPYDDDVVLQKLFHPNLKLLVVSEGPNGCRYYTQEFKGRVGGVKVKPVDTTGAGDAFVSGLLNSLASDLTLLKDEKKLREALLFANACGAITVTERGAIPAMPSMDAVQDLLSSTRS.

N-acetylglycine is present on Gly-2.

It belongs to the carbohydrate kinase PfkB family.

It catalyses the reaction D-fructose + ATP = D-fructose 6-phosphate + ADP + H(+). The protein operates within glycan biosynthesis; starch biosynthesis. In terms of biological role, may play an important role in maintaining the flux of carbon towards starch formation. This is Probable fructokinase-7 from Arabidopsis thaliana (Mouse-ear cress).